Consider the following 122-residue polypeptide: Large ribosomal subunit protein uL14 (122 aa).

It belongs to the universal ribosomal protein uL14 family. Part of the 50S ribosomal subunit. Forms a cluster with proteins L3 and L19. In the 70S ribosome, L14 and L19 interact and together make contacts with the 16S rRNA in bridges B5 and B8.

Functionally, binds to 23S rRNA. Forms part of two intersubunit bridges in the 70S ribosome. The sequence is that of Large ribosomal subunit protein uL14 from Chromobacterium violaceum (strain ATCC 12472 / DSM 30191 / JCM 1249 / CCUG 213 / NBRC 12614 / NCIMB 9131 / NCTC 9757 / MK).